A 283-amino-acid chain; its full sequence is Apidaecins type 73 (283 aa).

The first 18 residues, 1–18 (KNFALAILVVTFVVAVFG), serve as a signal peptide directing secretion. 9 propeptides span residues 19–41 (NTNL…EAEP), 62–69 (EAEPEAEP), 90–97 (EAELEAEP), 118–125 (EAEPEAEP), 146–153 (EAELEAEP), 174–181 (EAEPEAEP), 202–209 (EAEPEAEP), 230–237 (EAEPEAEP), and 258–265 (EAKPEAKP). Residues 19–283 (NTNLDPPTRP…PQPRPPHPRI (265 aa)) form a disordered region. A compositionally biased stretch (pro residues) spans 273–283 (IPQPRPPHPRI).

It belongs to the apidaecin family.

The protein resides in the secreted. In terms of biological role, apidaecins have bactericidal activity; predominantly against Gram-negative bacteria. They seem to interfere with cell propagation. This chain is Apidaecins type 73 (APID73), found in Apis mellifera (Honeybee).